We begin with the raw amino-acid sequence, 197 residues long: Holliday junction branch migration complex subunit RuvA (197 aa).

Residues 1-63 form a domain I region; it reads MISSLRGEVL…EDSMTLYGFV (63 aa). A domain II region spans residues 64 to 139; it reads DGETRDLFLT…KVGPAGSAAT (76 aa). Positions 139–143 are flexible linker; that stretch reads TAPAV. The tract at residues 144–197 is domain III; that stretch reads NGHTVRAPVVEALVGLGFAAKQAEEATDKVLAGDGEATTSSALRAALSLLGKAR.

This sequence belongs to the RuvA family. In terms of assembly, homotetramer. Forms an RuvA(8)-RuvB(12)-Holliday junction (HJ) complex. HJ DNA is sandwiched between 2 RuvA tetramers; dsDNA enters through RuvA and exits via RuvB. An RuvB hexamer assembles on each DNA strand where it exits the tetramer. Each RuvB hexamer is contacted by two RuvA subunits (via domain III) on 2 adjacent RuvB subunits; this complex drives branch migration. In the full resolvosome a probable DNA-RuvA(4)-RuvB(12)-RuvC(2) complex forms which resolves the HJ.

It localises to the cytoplasm. Functionally, the RuvA-RuvB-RuvC complex processes Holliday junction (HJ) DNA during genetic recombination and DNA repair, while the RuvA-RuvB complex plays an important role in the rescue of blocked DNA replication forks via replication fork reversal (RFR). RuvA specifically binds to HJ cruciform DNA, conferring on it an open structure. The RuvB hexamer acts as an ATP-dependent pump, pulling dsDNA into and through the RuvAB complex. HJ branch migration allows RuvC to scan DNA until it finds its consensus sequence, where it cleaves and resolves the cruciform DNA. This is Holliday junction branch migration complex subunit RuvA from Mycobacterium marinum (strain ATCC BAA-535 / M).